Consider the following 502-residue polypeptide: Transmembrane prolyl 4-hydroxylase (502 aa).

The tract at residues 1 to 29 (MAAAAVTGQRPETAAAEEASRPQWAPPDH) is disordered. Residues 1–60 (MAAAAVTGQRPETAAAEEASRPQWAPPDHCQAQAAAGLGDGEDAPVRPLCKPRGICSRAY) are Cytoplasmic-facing. A helical; Signal-anchor for type II membrane protein membrane pass occupies residues 61–81 (FLVLMVFVHLYLGNVLALLLF). At 82 to 502 (VHYSNGDESS…RAYRDARVEL (421 aa)) the chain is on the lumenal side. A disordered region spans residues 89 to 111 (ESSDPGPQHRAQGPGPEPTLGPL). EF-hand domains follow at residues 185 to 220 (TMQV…GNGW) and 224 to 259 (PESI…DFHK). Positions 198, 200, 202, 204, 209, 237, 239, 241, and 248 each coordinate Ca(2+). Residues 310–460 (LSEPLQVVRY…KWIANNWINV (151 aa)) enclose the Fe2OG dioxygenase domain. Residues H328 and D330 each coordinate Fe cation. N-linked (GlcNAc...) asparagine glycosylation is found at N348 and N368. Position 374 (E374) interacts with Fe cation. N-linked (GlcNAc...) asparagine glycosylation is present at N382. K451 serves as a coordination point for 2-oxoglutarate.

As to quaternary structure, homodimer. Fe(2+) is required as a cofactor. It depends on L-ascorbate as a cofactor. Post-translationally, glycosylated. In terms of tissue distribution, widely expressed with highest levels in adult pancreas, heart, skeletal muscle, brain, placenta, kidney and adrenal gland. Expressed at lower levels in epiphyseal cartilage and in fibroblasts.

Its subcellular location is the endoplasmic reticulum membrane. The catalysed reaction is L-prolyl-[hypoxia-inducible factor alpha subunit] + 2-oxoglutarate + O2 = trans-4-hydroxy-L-prolyl-[hypoxia-inducible factor alpha subunit] + succinate + CO2. Functionally, catalyzes the post-translational formation of 4-hydroxyproline in hypoxia-inducible factor (HIF) alpha proteins. Hydroxylates HIF1A at 'Pro-402' and 'Pro-564'. May function as a cellular oxygen sensor and, under normoxic conditions, may target HIF through the hydroxylation for proteasomal degradation via the von Hippel-Lindau ubiquitination complex. This chain is Transmembrane prolyl 4-hydroxylase (P4HTM), found in Homo sapiens (Human).